A 270-amino-acid chain; its full sequence is Fibroblast growth factor 5 (270 aa).

The signal sequence occupies residues 1 to 20; it reads MSLSFLLLLFLSHLILSAWA. The interval 25–86 is disordered; that stretch reads RLAPKGQPGP…EQSSFQWSPS (62 aa). Over residues 41-69 the composition is skewed to low complexity; that stretch reads PGGASSRRSSSSTATSSSSPASSSSAASR. Residues 76–86 show a composition bias toward polar residues; the sequence is LEQSSFQWSPS. Residue Asn-112 is glycosylated (N-linked (GlcNAc...) asparagine). The tract at residues 237–257 is disordered; the sequence is EKKKPPNPVKPKVPLSAPRRS.

The protein belongs to the heparin-binding growth factors family. In terms of assembly, interacts with FGFR1 and FGFR2. Affinity between fibroblast growth factors (FGFs) and their receptors is increased by heparan sulfate glycosaminoglycans that function as coreceptors.

Its subcellular location is the secreted. Functionally, plays an important role in the regulation of cell proliferation and cell differentiation. Required for normal regulation of the hair growth cycle. Functions as an inhibitor of hair elongation by promoting progression from anagen, the growth phase of the hair follicle, into catagen the apoptosis-induced regression phase. In Bos taurus (Bovine), this protein is Fibroblast growth factor 5 (FGF5).